A 430-amino-acid polypeptide reads, in one-letter code: Probable FAD-dependent monooxygenase (430 aa).

The signal sequence occupies residues 1–23 (MGSTSTPPHVLIIGAGITGLALA). 9–37 (HVLIIGAGITGLALAQALRKHGVSFAVYE) contributes to the FAD binding site. Asparagine 130 and asparagine 151 each carry an N-linked (GlcNAc...) asparagine glycan. Position 307 to 330 (307 to 330 (LEDWPTPPKGSWSNLGGTATLVGD)) interacts with FAD.

FAD is required as a cofactor.

The sequence is that of Probable FAD-dependent monooxygenase from Arthroderma benhamiae (strain ATCC MYA-4681 / CBS 112371) (Trichophyton mentagrophytes).